Consider the following 155-residue polypeptide: MEKMEKIKIKVVIDTNVFISALINPNGIPGKILDLIFEEKIVNYTSPSILKEIGFKCLSPKLRKYLGNENRILKILTAFSSVSVIINPNTNFNVCRDEDDNKFINVAYESKAIIITGDKDLISLRDENKYLKINNIHLKVPTPKEFIEEFEKFIS.

This is an uncharacterized protein from Methanocaldococcus jannaschii (strain ATCC 43067 / DSM 2661 / JAL-1 / JCM 10045 / NBRC 100440) (Methanococcus jannaschii).